Here is a 273-residue protein sequence, read N- to C-terminus: Putative tyrosine-protein phosphatase H16_A0669 (273 aa).

Residues 1–15 (MIKWLQRAGCLSAHA) form the signal peptide. The active-site Phosphocysteine intermediate is the Cys169.

The protein belongs to the protein-tyrosine phosphatase family.

The catalysed reaction is O-phospho-L-tyrosyl-[protein] + H2O = L-tyrosyl-[protein] + phosphate. This chain is Putative tyrosine-protein phosphatase H16_A0669, found in Cupriavidus necator (strain ATCC 17699 / DSM 428 / KCTC 22496 / NCIMB 10442 / H16 / Stanier 337) (Ralstonia eutropha).